A 461-amino-acid chain; its full sequence is MVFFWRKSDVEKKAEKGDKNAILELIKQGKKEKAEKILKKYASQREDLAELLFELYVQEGKLVQAYPLLKKYGDKIGKAKERAKVYQAVGEYQKAIEEFLKVGDFESLYNVAKIYHQLEKPDKALEYAQRAEKLVPYEKKEELENFITQLKKELGLIEEKKESILDKLRRGLQKTKEAVEFGVLFRGRKVDEEFFEELEEMLVKADVGVKTAVELTEKLRKEAIRKNIKEGEKIKELLKKELKELLKNCQGELKIPEKVGAVLLFVGVNGSGKTTTIGKLAHQLKQKGKKVLLVAGDTFRAAAIEQLEVWAKRAGVDIVKKEEGSDPGAVVYEGMKKAKEEGYEVVLVDTAGRLHTKEPLINELRKIKKVIQKFDKEEPSETLLVIDATTGQNAIQQAKVFKEAVDITGIVVTKLDGSAKGGAVVAICRELKIPIKLVGVGEGIDDLQPFDADAYVEALLE.

A TPR repeat occupies Phe-105–Glu-138. GTP-binding positions include Gly-267 to Thr-274, Asp-349 to Arg-353, and Thr-413 to Asp-416.

It belongs to the GTP-binding SRP family. FtsY subfamily. As to quaternary structure, part of the signal recognition particle protein translocation system, which is composed of SRP and FtsY.

The protein localises to the cell inner membrane. It localises to the cytoplasm. The enzyme catalyses GTP + H2O = GDP + phosphate + H(+). Involved in targeting and insertion of nascent membrane proteins into the cytoplasmic membrane. Acts as a receptor for the complex formed by the signal recognition particle (SRP) and the ribosome-nascent chain (RNC). The polypeptide is Signal recognition particle receptor FtsY (Aquifex aeolicus (strain VF5)).